The primary structure comprises 801 residues: Phenylalanine--tRNA ligase beta subunit (801 aa).

The 114-residue stretch at 39 to 152 (ARAFSGVVVG…TDAPIGTDIR (114 aa)) folds into the tRNA-binding domain. The 76-residue stretch at 407-482 (PARAPITLPI…RIYGYDNIPS (76 aa)) folds into the B5 domain. Residues Asp460, Asp466, Glu469, and Glu470 each contribute to the Mg(2+) site. The FDX-ACB domain occupies 706-799 (SKFPQVRRDI…LTVEHSAQLR (94 aa)).

This sequence belongs to the phenylalanyl-tRNA synthetase beta subunit family. Type 1 subfamily. In terms of assembly, tetramer of two alpha and two beta subunits. Requires Mg(2+) as cofactor.

It localises to the cytoplasm. It carries out the reaction tRNA(Phe) + L-phenylalanine + ATP = L-phenylalanyl-tRNA(Phe) + AMP + diphosphate + H(+). This chain is Phenylalanine--tRNA ligase beta subunit, found in Psychrobacter arcticus (strain DSM 17307 / VKM B-2377 / 273-4).